A 366-amino-acid chain; its full sequence is Palmitoyltransferase ZDHHC2 (366 aa).

At 1-15 (MAPSGPGGVRRRCRR) the chain is on the cytoplasmic side. Residues 16 to 36 (VLYWIPVVFISLLLGWSYYAY) form a helical membrane-spanning segment. Residues 37–47 (AIQLCIVSMEN) are Lumenal-facing. The helical transmembrane segment at 48–68 (IGEQVVCLMAYHLLFAMFVWS) threads the bilayer. Residues 69–169 (YWKTIFTLPM…NNCVGFSNYK (101 aa)) lie on the Cytoplasmic side of the membrane. Residues 126 to 176 (RYCDRCRLIKPDRCHHCSVCDKCILKMDHHCPWVNNCVGFSNYKFFLLFLA) form the DHHC domain. Residue Cys156 is the S-palmitoyl cysteine intermediate of the active site. The helical transmembrane segment at 170–190 (FFLLFLAYSLLYCLFIAATDL) threads the bilayer. Over 191–207 (QYFIRFWTNGLPDTQAK) the chain is Lumenal. Residues 208 to 228 (FHIMFLFFAAAMFSVSLSSLF) traverse the membrane as a helical segment. Over 229–366 (GYHCWLVSKN…NPALTMENET (138 aa)) the chain is Cytoplasmic. 2 stretches are compositionally biased toward polar residues: residues 297 to 316 (VNQD…TAKN) and 332 to 349 (SHLL…SNSG). Residues 297 to 366 (VNQDPEQPST…NPALTMENET (70 aa)) form a disordered region. Positions 298–366 (NQDPEQPSTP…NPALTMENET (69 aa)) are mediates localization to plasma membrane and recycling endosomes. Residues 334 to 335 (LL) carry the Non-canonical dileucine endocytic signal motif. The short motif at 357-360 (NPAL) is the NPxY-like endocytic signal element.

The protein belongs to the DHHC palmitoyltransferase family. Monomer. Homodimer. The monomeric form has a higher catalytic activity. Post-translationally, autopalmitoylated.

It is found in the postsynaptic density. Its subcellular location is the postsynaptic recycling endosome membrane. The protein localises to the cell membrane. It localises to the endoplasmic reticulum membrane. The protein resides in the golgi apparatus membrane. It carries out the reaction L-cysteinyl-[protein] + hexadecanoyl-CoA = S-hexadecanoyl-L-cysteinyl-[protein] + CoA. The enzyme catalyses L-cysteinyl-[protein] + tetradecanoyl-CoA = S-tetradecanoyl-L-cysteinyl-[protein] + CoA. The catalysed reaction is L-cysteinyl-[protein] + octadecanoyl-CoA = S-octadecanoyl-L-cysteinyl-[protein] + CoA. Functionally, palmitoyltransferase that catalyzes the addition of palmitate onto various protein substrates and is involved in a variety of cellular processes. Has no stringent fatty acid selectivity and in addition to palmitate can also transfer onto target proteins myristate from tetradecanoyl-CoA and stearate from octadecanoyl-CoA. In the nervous system, plays a role in long term synaptic potentiation by palmitoylating AKAP5 through which it regulates protein trafficking from the dendritic recycling endosomes to the plasma membrane and controls both structural and functional plasticity at excitatory synapses. In dendrites, mediates the palmitoylation of DLG4 when synaptic activity decreases and induces synaptic clustering of DLG4 and associated AMPA-type glutamate receptors. Also mediates the de novo and turnover palmitoylation of RGS7BP, a shuttle for Gi/o-specific GTPase-activating proteins/GAPs, promoting its localization to the plasma membrane in response to the activation of G protein-coupled receptors. Through the localization of these GTPase-activating proteins/GAPs, it also probably plays a role in G protein-coupled receptors signaling in neurons. Also probably plays a role in cell adhesion by palmitoylating CD9 and CD151 to regulate their expression and function. Palmitoylates the endoplasmic reticulum protein CKAP4 and regulates its localization to the plasma membrane. Could also palmitoylate LCK and regulate its localization to the plasma membrane. The protein is Palmitoyltransferase ZDHHC2 of Rattus norvegicus (Rat).